Reading from the N-terminus, the 201-residue chain is 3-isopropylmalate dehydratase small subunit (201 aa).

It belongs to the LeuD family. LeuD type 1 subfamily. As to quaternary structure, heterodimer of LeuC and LeuD.

The enzyme catalyses (2R,3S)-3-isopropylmalate = (2S)-2-isopropylmalate. It participates in amino-acid biosynthesis; L-leucine biosynthesis; L-leucine from 3-methyl-2-oxobutanoate: step 2/4. Its function is as follows. Catalyzes the isomerization between 2-isopropylmalate and 3-isopropylmalate, via the formation of 2-isopropylmaleate. The protein is 3-isopropylmalate dehydratase small subunit of Cytophaga hutchinsonii (strain ATCC 33406 / DSM 1761 / CIP 103989 / NBRC 15051 / NCIMB 9469 / D465).